The following is a 417-amino-acid chain: uncharacterized protein (417 aa).

A run of 9 helical transmembrane segments spans residues 1-21, 32-52, 96-116, 168-188, 192-212, 261-281, 286-306, 351-371, and 392-412; these read MSVL…VLLS, VVGA…VPAG, VLPI…LGIM, LFAI…AGYA, VPLT…LLFA, IAFV…GGWF, LTLQ…IGVT, AIIT…ILIG, and VIAG…FIGL.

This sequence belongs to the concentrative nucleoside transporter (CNT) (TC 2.A.41) family.

It localises to the cell inner membrane. This is an uncharacterized protein from Haemophilus influenzae (strain ATCC 51907 / DSM 11121 / KW20 / Rd).